Here is a 576-residue protein sequence, read N- to C-terminus: Lipoprotein LpqB (576 aa).

The first 16 residues, 1–16 (MRRVTRTIAAAGAAIA), serve as a signal peptide directing secretion. The N-palmitoyl cysteine moiety is linked to residue Cys17. A lipid anchor (S-diacylglycerol cysteine) is attached at Cys17.

This sequence belongs to the LpqB lipoprotein family.

The protein resides in the cell membrane. The protein is Lipoprotein LpqB of Bifidobacterium longum (strain NCC 2705).